A 184-amino-acid chain; its full sequence is C-phycoerythrin beta chain (184 aa).

The (2R,3E)-phycoerythrobilin site is built by C48 and C59. N70 carries the N4-methylasparagine modification. (2R,3E)-phycoerythrobilin is bound by residues C80 and C165.

Belongs to the phycobiliprotein family. Heterodimer of an alpha and a beta chain. Contains three covalently linked bilin chromophores.

Its subcellular location is the cellular thylakoid membrane. In terms of biological role, light-harvesting photosynthetic bile pigment-protein from the phycobiliprotein complex. The sequence is that of C-phycoerythrin beta chain (cpeB) from Microchaete diplosiphon (Fremyella diplosiphon).